The chain runs to 891 residues: Alanine--tRNA ligase (891 aa).

Zn(2+)-binding residues include histidine 564, histidine 568, cysteine 678, and histidine 682.

This sequence belongs to the class-II aminoacyl-tRNA synthetase family. Zn(2+) serves as cofactor.

It is found in the cytoplasm. It carries out the reaction tRNA(Ala) + L-alanine + ATP = L-alanyl-tRNA(Ala) + AMP + diphosphate. Its function is as follows. Catalyzes the attachment of alanine to tRNA(Ala) in a two-step reaction: alanine is first activated by ATP to form Ala-AMP and then transferred to the acceptor end of tRNA(Ala). Also edits incorrectly charged Ser-tRNA(Ala) and Gly-tRNA(Ala) via its editing domain. The sequence is that of Alanine--tRNA ligase from Nitrobacter hamburgensis (strain DSM 10229 / NCIMB 13809 / X14).